We begin with the raw amino-acid sequence, 3010 residues long: Genome polyprotein (3010 aa).

Position 2 is an N-acetylserine; by host (Ser-2). Residues 2-23 (STNPKPQRKTKRNTYRRPQDVK) are interaction with STAT1. Residues 2 to 58 (STNPKPQRKTKRNTYRRPQDVKFPGGGQIVGGVYVLPRRGPTLGVRATRKTSERSQP) are interaction with EIF2AK2/PKR. Residues 2-59 (STNPKPQRKTKRNTYRRPQDVKFPGGGQIVGGVYVLPRRGPTLGVRATRKTSERSQPR) form an interaction with DDX3X region. The segment at 2-75 (STNPKPQRKT…PKARRPEGRA (74 aa)) is disordered. Residues 2–168 (STNPKPQRKT…EDGVNYATGN (167 aa)) lie on the Cytoplasmic side of the membrane. 2 short sequence motifs (nuclear localization signal) span residues 5–13 (PKPQRKTKR) and 38–43 (PRRGPT). The segment covering 7–16 (PQRKTKRNTY) has biased composition (basic residues). Ser-53 bears the Phosphoserine; by host mark. 2 consecutive short sequence motifs (nuclear localization signal) follow at residues 58 to 64 (PRGRRQP) and 66 to 71 (PKARRP). The span at 58–68 (PRGRRQPIPKA) shows a compositional bias: basic residues. Residue Ser-99 is modified to Phosphoserine; by host. Positions 112 to 152 (PRRRSRNLGKVIDTLTCGFADLMGYIPLVGAPLGGAARALA) are important for endoplasmic reticulum and mitochondrial localization. The residue at position 116 (Ser-116) is a Phosphoserine; by host PKA. Residues 122-173 (VIDTLTCGFADLMGYIPLVGAPLGGAARALAHGVRVLEDGVNYATGNLPGCS) are interaction with APOA2. The important for lipid droplets localization stretch occupies residues 164 to 167 (YATG). A helical membrane pass occupies residues 169-189 (LPGCSFSIFLLALLSCLTIPA). Residues 178–191 (LLALLSCLTIPASA) constitute a propeptide, ER anchor for the core protein, removed in mature form by host signal peptidase. Residues 190–358 (SAYQVRNASG…AGAHWGVLAG (169 aa)) are Lumenal-facing. Residues Asn-196, Asn-209, Asn-234, and Asn-250 are each glycosylated (N-linked (GlcNAc...) asparagine; by host). The segment at 265-296 (LVGAAAFCSAMYVGDLCGSVFLVSQLFTFSPR) is important for fusion. Asn-305 carries N-linked (GlcNAc...) asparagine; by host glycosylation. Residues 359–379 (LAYYSMVGNWAKVLIVMLLFA) form a helical membrane-spanning segment. Over 380–725 (GVDGVTYTTG…WEYIVLLFLL (346 aa)) the chain is Lumenal. The HVR1 stretch occupies residues 385–411 (TYTTGGSQARHTQSVTSFFTQGPAQRI). 4 N-linked (GlcNAc...) (high mannose) asparagine; by host glycosylation sites follow: Asn-417, Asn-423, Asn-430, and Asn-448. Intrachain disulfides connect Cys-429-Cys-552, Cys-452-Cys-459, Cys-486-Cys-494, and Cys-503-Cys-508. The segment at 474–479 (YTEPRD) is HVR2. The segment at 480–493 (LDQRPYCWHYAPRQ) is CD81-binding 1. Asn-532 is a glycosylation site (N-linked (GlcNAc...) (high mannose) asparagine; by host). Asn-540 carries N-linked (GlcNAc...) asparagine; by host glycosylation. Positions 544 to 551 (PPQGNWFG) are CD81-binding 2. An N-linked (GlcNAc...) (high mannose) asparagine; by host glycan is attached at Asn-556. The cysteines at positions 564 and 569 are disulfide-linked. N-linked (GlcNAc...) (high mannose) asparagine; by host glycosylation is present at Asn-576. Intrachain disulfides connect Cys-581–Cys-585, Cys-597–Cys-620, and Cys-607–Cys-644. Asn-623 and Asn-645 each carry an N-linked (GlcNAc...) (high mannose) asparagine; by host glycan. An intrachain disulfide couples Cys-652 to Cys-677. The interval 660-671 (SELSPLLLSTTE) is PKR/eIF2-alpha phosphorylation homology domain (PePHD). Residues 726–746 (LADARVCACLWMMLLIAQAEA) form a helical membrane-spanning segment. Residues 747-757 (ALENLVVLNAA) lie on the Lumenal side of the membrane. Residues 758–778 (SLAGADGILSFLVFFCAAWYI) form a helical membrane-spanning segment. Over 779–781 (KGR) the chain is Cytoplasmic. A helical transmembrane segment spans residues 782–803 (LVPGAAYALYGVWPLLLLLLAL). Over 804-813 (PPRAYAMDRE) the chain is Lumenal. A helical membrane pass occupies residues 814-834 (MAASCGGVVFVGLILLTLSPH). The Cytoplasmic portion of the chain corresponds to 835–838 (YKVF). Residues 839–859 (LARLIWWLQYFITRAEAHLCV) traverse the membrane as a helical segment. The Lumenal portion of the chain corresponds to 860–881 (WVPPLNVRGGRDAIILLTCAAH). A helical transmembrane segment spans residues 882 to 902 (PELIFDITKLLLAILGPLMVL). Residues 903–1026 (QAAITAMPYF…SIEGQGWRLL (124 aa)) form the Peptidase C18 domain. At 903-1657 (QAAITAMPYF…CMSADLEVVT (755 aa)) the chain is on the cytoplasmic side. Residues 904–1206 (AAITAMPYFV…PVESMETTMR (303 aa)) form a protease NS2-3 region. The S-palmitoyl cysteine; by host moiety is linked to residue Cys-922. Residues 929 to 949 (AGGHYVQMAFMKLAALTGTYV) form an interaction with host SCPS1 region. Catalysis depends on for protease NS2 activity; shared with dimeric partner residues His-952, Glu-972, and Cys-993. Positions 1027-1208 (APITAYAQQT…ESMETTMRSP (182 aa)) constitute a Peptidase S29 domain. Catalysis depends on charge relay system; for serine protease NS3 activity residues His-1083 and Asp-1107. Zn(2+) contacts are provided by Cys-1123 and Cys-1125. Ser-1165 acts as the Charge relay system; for serine protease NS3 activity in catalysis. Residues Cys-1171 and His-1175 each contribute to the Zn(2+) site. The Helicase ATP-binding domain maps to 1217–1369 (PAVPQTFQVA…PNIEEVALSN (153 aa)). Position 1230-1237 (1230-1237 (APTGSGKS)) interacts with ATP. The Mg(2+) site is built by Ser-1237 and Glu-1317. The short motif at 1316–1319 (DECH) is the DECH box element. An RNA-binding region spans residues 1486–1497 (QRRGRTGRGRGG). The helical transmembrane segment at 1658 to 1678 (STWVLVGGVLAALAAYCLTTG) threads the bilayer. The interval 1679 to 1690 (SVVIVGRIILSG) is NS3-binding. Topologically, residues 1679–1805 (SVVIVGRIIL…SITSPLTTQN (127 aa)) are cytoplasmic. A helical transmembrane segment spans residues 1806 to 1824 (TLLFNILGGWVAAQLAPPS). Residues 1825 to 1828 (AASA) lie on the Lumenal side of the membrane. A helical transmembrane segment spans residues 1829–1849 (FVGAGIAGAAIGSIGLGKVLV). Residue Asp-1850 is a topological domain, cytoplasmic. Residues 1851 to 1871 (ILAGYGAGVAGALVAFKVMSG) traverse the membrane as a helical segment. At 1872–1881 (EAPSAEDLVN) the chain is on the lumenal side. The chain crosses the membrane as a helical span at residues 1882 to 1902 (LLPAILSPGALVVGVVCAAIL). The Cytoplasmic portion of the chain corresponds to 1903 to 1972 (RRHVGPGEGA…WINEDCSTPC (70 aa)). S-palmitoyl cysteine; by host attachment occurs at residues Cys-1968 and Cys-1972. Residues 1973–2002 (SGSWLKDVWDWICTVLTDFKTWLQSKLLPK) lie within the membrane without spanning it. Residues 2003 to 2989 (LPGVPFFSCQ…YHSLSRARPR (987 aa)) lie on the Cytoplasmic side of the membrane. Cys-2011, Cys-2029, Cys-2031, and Cys-2052 together coordinate Zn(2+). Residues 2120–2208 (EFFTELDGVR…ASSSASQLSA (89 aa)) are FKBP8-binding. A transcriptional activation region spans residues 2120–2332 (EFFTELDGVR…PIPPPRKKRT (213 aa)). An interaction with non-structural protein 4A region spans residues 2135–2139 (PACRP). The tract at residues 2187-2220 (KRRLARGSPPSLASSSASQLSAPSLKATCTTHHD) is disordered. Positions 2189–2441 (RLARGSPPSL…PCAAEESKLP (253 aa)) are interaction with host SKP2. Ser-2194 carries the post-translational modification Phosphoserine; by host; in p56. The segment covering 2194–2211 (SPPSLASSSASQLSAPSL) has biased composition (low complexity). Phosphoserine; by host; in p58 is present on residues Ser-2197, Ser-2201, Ser-2204, Ser-2207, and Ser-2210. Residues 2210 to 2249 (SLKATCTTHHDSPDADLIEANLLWRQEMGGNITRVESENK) form an ISDR region. The interaction with EIF2AK2/PKR stretch occupies residues 2210–2275 (SLKATCTTHH…REVSVAAEIL (66 aa)). The NS4B-binding stretch occupies residues 2249–2306 (KVVILDSFDPLRAEEDEREVSVAAEILRKSKKFPPALPIWARPDYNPPLLESWKSPDY). The short motif at 2322-2325 (PPIP) is the SH3-binding element. The Nuclear localization signal motif lies at 2326–2334 (PPRKKRTVV). Residue Lys-2350 forms a Glycyl lysine isopeptide (Lys-Gly) (interchain with G-Cter in ubiquitin) linkage. Residues 2351 to 2371 (TFGSSGSSAVDSGTATAPPDQ) show a composition bias toward polar residues. The segment at 2351 to 2408 (TFGSSGSSAVDSGTATAPPDQTSDDGDKESDVESYSSMPPLEGEPGDPDLSDGSWSTV) is disordered. Positions 2354–2377 (SSGSSAVDSGTATAPPDQTSDDGD) are V3. Positions 2372–2382 (TSDDGDKESDV) are enriched in acidic residues. Phosphoserine; by host occurs at positions 2448 and 2461. In terms of domain architecture, RdRp catalytic spans 2633 to 2751 (PMGFSYDTRC…ICESAGTQED (119 aa)). Mg(2+) contacts are provided by Asp-2639, Asp-2737, and Asp-2738. Residues 2990-3010 (WFMWCLLLLSVGVGIYLLPNR) form a helical membrane-spanning segment.

This sequence belongs to the hepacivirus polyprotein family. In terms of assembly, homooligomer. Interacts with E1 (via C-terminus). Interacts with the non-structural protein 5A. Interacts (via N-terminus) with host STAT1 (via SH2 domain); this interaction results in decreased STAT1 phosphorylation and ubiquitin-mediated proteasome-dependent STAT1 degradation, leading to decreased IFN-stimulated gene transcription. Interacts with host STAT3; this interaction constitutively activates STAT3. Interacts with host LTBR receptor. Interacts with host TNFRSF1A receptor and possibly induces apoptosis. Interacts with host HNRPK. Interacts with host YWHAE. Interacts with host UBE3A/E6AP. Interacts with host DDX3X. Interacts with host APOA2. Interacts with host RXRA protein. Interacts with host SP110 isoform 3/Sp110b; this interaction sequesters the transcriptional corepressor SP110 away from the nucleus. Interacts with host CREB3 nuclear transcription protein; this interaction triggers cell transformation. Interacts with host ACY3. Interacts with host C1QR1. Interacts with host RBM24; this interaction, which enhances the interaction of the mature core protein with 5'-UTR, may inhibit viral translation and favor replication. Interacts with host EIF2AK2/PKR; this interaction induces the autophosphorylation of EIF2AK2. Part of the viral assembly initiation complex composed of NS2, E1, E2, NS3, NS4A, NS5A and the mature core protein. As to quaternary structure, forms a heterodimer with envelope glycoprotein E2. Interacts with mature core protein. Interacts with protease NS2. The heterodimer E1/E2 interacts with host CLDN1; this interaction plays a role in viral entry into host cell. Interacts with host SPSB2 (via C-terminus). Part of the viral assembly initiation complex composed of NS2, E1, E2, NS3, NS4A, NS5A and the mature core protein. Interacts with host NEURL3; this interaction prevents E1 binding to glycoprotein E2. Forms a heterodimer with envelope glycoprotein E1. Interacts with host CD81 and SCARB1 receptors; these interactions play a role in viral entry into host cell. Interacts with host EIF2AK2/PKR; this interaction inhibits EIF2AK2 and probably allows the virus to evade the innate immune response. Interacts with host CD209/DC-SIGN and CLEC4M/DC-SIGNR. Interact with host SPCS1; this interaction is essential for viral particle assembly. Interacts with protease NS2. The heterodimer E1/E2 interacts with host CLDN1; this interaction plays a role in viral entry into host cell. Part of the viral assembly initiation complex composed of NS2, E1, E2, NS3, NS4A, NS5A and the mature core protein. Interacts with host SLC3A2/4F2hc; the interaction may facilitate viral entry into host cell. Interacts with human PLSCR1. In terms of assembly, homohexamer. Homoheptamer. Interacts with protease NS2. As to quaternary structure, homodimer. Interacts with host SPCS1; this interaction is essential for viral particle assembly. Interacts with envelope glycoprotein E1. Interacts with envelope glycoprotein E2. Interacts with viroporin p7. Interacts with serine protease/helicase NS3. Part of the replication complex composed of NS2, NS3, NS4A, NS4B, NS5A and the RNA-directed RNA polymerase embedded in an ER-derived membranous web. Part of the viral assembly initiation complex composed of NS2, E1, E2, NS3, NS4A, NS5A and the mature core protein. Interacts with protease NS2. Interacts with non-structural protein 4A; this interaction stabilizes the folding of NS3 serine protease. NS3-NS4A interaction is essential for NS3 activation and allows membrane anchorage of the latter. NS3/NS4A complex also prevents phosphorylation of host IRF3, thus preventing the establishment of dsRNA induced antiviral state. Interacts with host MAVS; this interaction leads to the cleavage and inhibition of host MAVS. Interacts with host TICAM1; this interaction leads to the cleavage and inhibition of host TICAM1. Interacts with host TANK-binding kinase/TBK1; this interaction results in the inhibition of the association between TBK1 and IRF3, which leads to the inhibition of IRF3 activation. Interacts with host RBM24. Part of the replication complex composed of NS2, NS3, NS4A, NS4B, NS5A and the RNA-directed RNA polymerase embedded in an ER-derived membranous web. Part of the viral assembly initiation complex composed of NS2, E1, E2, NS3, NS4A, NS5A and the mature core protein. In terms of assembly, interacts with NS3 serine protease; this interaction stabilizes the folding of NS3 serine protease. NS3-NS4A interaction is essential for NS3 activation and allows membrane anchorage of the latter. Interacts with non-structural protein 5A (via N-terminus). Part of the replication complex composed of NS2, NS3, NS4A, NS4B, NS5A and the RNA-directed RNA polymerase embedded in an ER-derived membranous web. Part of the viral assembly initiation complex composed of NS2, E1, E2, NS3, NS4A, NS5A and the mature core protein. As to quaternary structure, homomultimer. Interacts with non-structural protein NS5A. Interacts with host PLA2G4C; this interaction likely initiates the recruitment of replication complexes to lipid droplets. Interacts with host STING; this interaction disrupts the interaction between STING and TBK1 thereby suppressing the interferon signaling. Part of the replication complex composed of NS2, NS3, NS4A, NS4B, NS5A and the RNA-directed RNA polymerase embedded in an ER-derived membranous web. Monomer. Homodimer; dimerization is required for RNA-binding. Interacts with the mature core protein. Interacts (via N-terminus) with non-structural protein 4A. Interacts with non-structural protein 4B. Interacts (via region D2) with RNA-directed RNA polymerase. Part of the viral assembly initiation complex composed of NS2, E1, E2, NS3, NS4A, NS5A and the mature core protein. Part of the replication complex composed of NS2, NS3, NS4A, NS4B, NS5A and the RNA-directed RNA polymerase embedded in an ER-derived membranous web. Interacts with host GRB2. Interacts with host BIN1. Interacts with host PIK3R1. Interacts with host SRCAP. Interacts with host FKBP8. Interacts (via C-terminus) with host VAPB (via MSP domain). Interacts with host EIF2AK2/PKR; this interaction leads to disruption of EIF2AK2 dimerization by NS5A and probably allows the virus to evade the innate immune response. Interacts (via N-terminus) with host PACSIN2 (via N-terminus); this interaction attenuates protein kinase C alpha-mediated phosphorylation of PACSIN2 by disrupting the interaction between PACSIN2 and PRKCA. Interacts (via N-terminus) with host SRC kinase (via SH2 domain). Interacts with most Src-family kinases. Interacts with host IFI27 and SKP2; promotes the ubiquitin-mediated proteasomal degradation of NS5A. Interacts with host GPS2. Interacts with host TNFRSF21; this interaction allows the modulation by the virus of JNK, p38 MAPK, STAT3, and Akt signaling pathways in a DR6-dependent manner. Interacts (via N-terminus) with host CIDEB (via N-terminus); this interaction seems to regulate the association of HCV particles with APOE. Interacts with host CHKA/Choline Kinase-alpha; CHKA bridges host PI4KA and NS5A and potentiates NS5A-stimulated PI4KA activity, which then facilitates the targeting of the ternary complex to the ER for viral replication. Interacts with host SPSB2 (via C-terminus); this interaction targets NS5A for ubiquitination and degradation. Interacts with host RAB18; this interaction may promote the association of NS5A and other replicase components with lipid droplets. Interacts (via region D2) with host PPIA/CYPA; the interaction stimulates RNA-binding ability of NS5A and is dependent on the peptidyl-prolyl cis-trans isomerase activity of PPIA/CYPA. Interacts with host TRIM14; this interaction induces the degradation of NS5A. In terms of assembly, homooligomer. Interacts with non-structural protein 5A. Interacts with host VAPB. Interacts with host PRK2/PKN2. Interacts with host HNRNPA1 and SEPT6; these interactions facilitate viral replication. Part of the replication complex composed of NS2, NS3, NS4A, NS4B, NS5A and the RNA-directed RNA polymerase. Zn(2+) is required as a cofactor. Mg(2+) serves as cofactor. Specific enzymatic cleavages in vivo yield mature proteins. The structural proteins, core, E1, E2 and p7 are produced by proteolytic processing by host signal peptidases. The core protein precursor is synthesized as a 23 kDa, which is retained in the ER membrane through the hydrophobic signal peptide. Cleavage by the signal peptidase releases the 21 kDa mature core protein. The cleavage of the core protein precursor occurs between aminoacids 176 and 188 but the exact cleavage site is not known. Some degraded forms of the core protein appear as well during the course of infection. The other proteins (p7, NS2, NS3, NS4A, NS4B, NS5A and NS5B) are cleaved by the viral proteases. Autoprocessing between NS2 and NS3 is mediated by the NS2 cysteine protease catalytic domain and regulated by the NS3 N-terminal domain. In terms of processing, phosphorylated by host PKC and PKA. Post-translationally, ubiquitinated; mediated by UBE3A and leading to core protein subsequent proteasomal degradation. Highly N-glycosylated. In terms of processing, palmitoylation is required for NS2/3 autoprocessing and E2 recruitment to membranes. Post-translationally, palmitoylated. This modification may play a role in its polymerization or in protein-protein interactions. Phosphorylated on serines in a basal form termed p56. p58 is a hyperphosphorylated form of p56. p56 and p58 coexist in the cell in roughly equivalent amounts. Hyperphosphorylation is dependent on the presence of NS4A. Host CSNK1A1/CKI-alpha or RPS6KB1 kinases may be responsible for NS5A phosphorylation. In terms of processing, tyrosine phosphorylation is essential for the interaction with host SRC. Post-translationally, ubiquitinated. Ubiquitination, most probably at Lys-2350, mediated by host IFI27 and SKP2 leads to proteasomal degradation, restricting viral infection. Ubiquitination by host TRIM22 leads to interruption of viral replication. The N-terminus is phosphorylated by host PRK2/PKN2.

It localises to the host endoplasmic reticulum membrane. Its subcellular location is the host mitochondrion membrane. The protein localises to the virion. It is found in the host cytoplasm. The protein resides in the host nucleus. It localises to the host lipid droplet. Its subcellular location is the virion membrane. The protein localises to the host mitochondrion. It is found in the host cell membrane. The protein resides in the host perinuclear region. The enzyme catalyses Hydrolysis of four peptide bonds in the viral precursor polyprotein, commonly with Asp or Glu in the P6 position, Cys or Thr in P1 and Ser or Ala in P1'.. It carries out the reaction a ribonucleoside 5'-triphosphate + H2O = a ribonucleoside 5'-diphosphate + phosphate + H(+). It catalyses the reaction ATP + H2O = ADP + phosphate + H(+). The catalysed reaction is RNA(n) + a ribonucleoside 5'-triphosphate = RNA(n+1) + diphosphate. With respect to regulation, inhibited by the antiviral drug hexamethylene amiloride. Inhibition by amantadine appears to be genotype-dependent. Also inhibited by long-alkyl-chain iminosugar derivatives. Its activity is regulated as follows. Activity is up-regulated by PRK2/PKN2-mediated phosphorylation. In terms of biological role, packages viral RNA to form a viral nucleocapsid, and promotes virion budding. Participates in the viral particle production as a result of its interaction with the non-structural protein 5A. Binds RNA and may function as a RNA chaperone to induce the RNA structural rearrangements taking place during virus replication. Modulates viral translation initiation by interacting with viral IRES and 40S ribosomal subunit. Affects various cell signaling pathways, host immunity and lipid metabolism. Prevents the establishment of cellular antiviral state by blocking the interferon-alpha/beta (IFN-alpha/beta) and IFN-gamma signaling pathways and by blocking the formation of phosphorylated STAT1 and promoting ubiquitin-mediated proteasome-dependent degradation of STAT1. Activates STAT3 leading to cellular transformation. Regulates the activity of cellular genes, including c-myc and c-fos. May repress the promoter of p53, and sequester CREB3 and SP110 isoform 3/Sp110b in the cytoplasm. Represses cell cycle negative regulating factor CDKN1A, thereby interrupting an important check point of normal cell cycle regulation. Targets transcription factors involved in the regulation of inflammatory responses and in the immune response: suppresses TNF-induced NF-kappa-B activation, and activates AP-1. Binds to dendritic cells (DCs) via C1QR1, resulting in down-regulation of T-lymphocytes proliferation. Alters lipid metabolism by interacting with hepatocellular proteins involved in lipid accumulation and storage. Induces up-regulation of FAS promoter activity, and thereby contributes to the increased triglyceride accumulation in hepatocytes (steatosis). Functionally, forms a heterodimer with envelope glycoprotein E2, which mediates virus attachment to the host cell, virion internalization through clathrin-dependent endocytosis and fusion with host membrane. Fusion with the host cell is most likely mediated by both E1 and E2, through conformational rearrangements of the heterodimer required for fusion rather than a classical class II fusion mechanism. E1/E2 heterodimer binds host apolipoproteins such as APOB and ApoE thereby forming a lipo-viro-particle (LVP). APOE associated to the LVP allows the initial virus attachment to cell surface receptors such as the heparan sulfate proteoglycans (HSPGs), syndecan-1 (SDC1), syndecan-1 (SDC2), the low-density lipoprotein receptor (LDLR) and scavenger receptor class B type I (SCARB1). The cholesterol transfer activity of SCARB1 allows E2 exposure and binding of E2 to SCARB1 and the tetraspanin CD81. E1/E2 heterodimer binding on CD81 activates the epithelial growth factor receptor (EGFR) signaling pathway. Diffusion of the complex E1-E2-EGFR-SCARB1-CD81 to the cell lateral membrane allows further interaction with Claudin 1 (CLDN1) and occludin (OCLN) to finally trigger HCV entry. Forms a heterodimer with envelope glycoprotein E1, which mediates virus attachment to the host cell, virion internalization through clathrin-dependent endocytosis and fusion with host membrane. Fusion with the host cell is most likely mediated by both E1 and E2, through conformational rearrangements of the heterodimer required for fusion rather than a classical class II fusion mechanism. The interaction between envelope glycoprotein E2 and host apolipoprotein E/APOE allows the proper assembly, maturation and infectivity of the viral particles. This interaction is probably promoted via the up-regulation of cellular autophagy by the virus. E1/E2 heterodimer binds host apolipoproteins such as APOB and APOE thereby forming a lipo-viro-particle (LVP). APOE associated to the LVP allows the initial virus attachment to cell surface receptors such as the heparan sulfate proteoglycans (HSPGs), syndecan-1 (SDC1), syndecan-1 (SDC2), the low-density lipoprotein receptor (LDLR) and scavenger receptor class B type I (SCARB1). The cholesterol transfer activity of SCARB1 allows E2 exposure and binding of E2 to SCARB1 and the tetraspanin CD81. E1/E2 heterodimer binding on CD81 activates the epithelial growth factor receptor (EGFR) signaling pathway. Diffusion of the complex E1-E2-EGFR-SCARB1-CD81 to the cell lateral membrane allows further interaction with Claudin 1 (CLDN1) and occludin (OCLN) to finally trigger HCV entry. Inhibits host EIF2AK2/PKR activation, preventing the establishment of an antiviral state. Viral ligand for CD209/DC-SIGN and CLEC4M/DC-SIGNR, which are respectively found on dendritic cells (DCs), and on liver sinusoidal endothelial cells and macrophage-like cells of lymph node sinuses. These interactions allow the capture of circulating HCV particles by these cells and subsequent facilitated transmission to permissive cells such as hepatocytes and lymphocyte subpopulations. The interaction between E2 and host amino acid transporter complex formed by SLC3A2 and SLC7A5/LAT1 may facilitate viral entry into host cell. Its function is as follows. Ion channel protein that acts as a viroporin and plays an essential role in the assembly, envelopment and secretion of viral particles. Regulates the host cell secretory pathway, which induces the intracellular retention of viral glycoproteins and favors assembly of viral particles. Creates a pore in acidic organelles and releases Ca(2+) and H(+) in the cytoplasm of infected cells, leading to a productive viral infection. High levels of cytoplasmic Ca(2+) may trigger membrane trafficking and transport of viral ER-associated proteins to viroplasms, sites of viral genome replication. This ionic imbalance induces the assembly of the inflammasome complex, which triggers the maturation of pro-IL-1beta into IL-1beta through the action of caspase-1. Targets also host mitochondria and induces mitochondrial depolarization. In addition of its role as a viroporin, acts as a lipid raft adhesion factor. In terms of biological role, cysteine protease required for the proteolytic auto-cleavage between the non-structural proteins NS2 and NS3. The N-terminus of NS3 is required for the function of NS2 protease (active region NS2-3). Promotes the initiation of viral particle assembly by mediating the interaction between structural and non-structural proteins. Functionally, displays three enzymatic activities: serine protease with a chymotrypsin-like fold, NTPase and RNA helicase. NS3 serine protease, in association with NS4A, is responsible for the cleavages of NS3-NS4A, NS4A-NS4B, NS4B-NS5A and NS5A-NS5B. The NS3/NS4A complex prevents phosphorylation of host IRF3, thus preventing the establishment of dsRNA induced antiviral state. The NS3/NS4A complex induces host amino acid transporter component SLC3A2, thus contributing to HCV propagation. NS3 RNA helicase binds to RNA and unwinds both dsDNA and dsRNA in the 3' to 5' direction, and likely resolves RNA complicated stable secondary structures in the template strand. Binds a single ATP and catalyzes the unzipping of a single base pair of dsRNA. Inhibits host antiviral proteins TBK1 and IRF3 thereby preventing the establishment of an antiviral state. Cleaves host MAVS/CARDIF thereby preventing the establishment of an antiviral state. Cleaves host TICAM1/TRIF, thereby disrupting TLR3 signaling and preventing the establishment of an antiviral state. Induces a specific membrane alteration that serves as a scaffold for the virus replication complex. This membrane alteration gives rise to the so-called ER-derived membranous web that contains the replication complex. NS4B self-interaction contributes to its function in membranous web formation. Promotes host TRIF protein degradation in a CASP8-dependent manner thereby inhibiting host TLR3-mediated interferon signaling. Disrupts the interaction between STING and TBK1 contributing to the inhibition of interferon signaling. Its function is as follows. Phosphorylated protein that is indispensable for viral replication and assembly. Both hypo- and hyperphosphorylated states are required for the viral life cycle. The hyperphosphorylated form of NS5A is an inhibitor of viral replication. Involved in RNA-binding and especially in binding to the viral genome. Zinc is essential for RNA-binding. Participates in the viral particle production as a result of its interaction with the mature viral core protein. Its interaction with host VAPB may target the viral replication complex to vesicles. Down-regulates viral IRES translation initiation. Mediates interferon resistance, presumably by interacting with and inhibiting host EIF2AK2/PKR. Prevents BIN1-induced apoptosis. Acts as a transcriptional activator of some host genes important for viral replication when localized in the nucleus. Via the interaction with host PACSIN2, modulates lipid droplet formation in order to promote virion assembly. Modulates TNFRSF21/DR6 signaling pathway for viral propagation. In terms of biological role, RNA-dependent RNA polymerase that performs primer-template recognition and RNA synthesis during viral replication. Initiates RNA transcription/replication at a flavin adenine dinucleotide (FAD), resulting in a 5'- FAD cap on viral RNAs. In this way, recognition of viral 5' RNA by host pattern recognition receptors can be bypassed, thereby evading activation of antiviral pathways. Functionally, peptide cofactor which forms a non-covalent complex with the N-terminal of NS3 serine protease. The NS3/NS4A complex prevents phosphorylation of host IRF3, thus preventing the establishment of dsRNA induced antiviral state. The NS3/NS4A complex induces host amino acid transporter component SLC3A2, thus contributing to HCV propagation. The protein is Genome polyprotein of Homo sapiens (Human).